The chain runs to 230 residues: Esterase OVCA2 (230 aa).

Catalysis depends on charge relay system residues Ser124, Asp182, and His209.

It belongs to the LovG family.

The enzyme catalyses a carboxylic ester + H2O = an alcohol + a carboxylate + H(+). Its function is as follows. Exhibits ester hydrolase activity with a strong preference for long-chain alkyl ester substrates and high selectivity against a variety of short, branched, and substituted esters. Is able to hydrolyze ester bonds within a wide range of p-nitrophenyl derivatives (C2-C14) in vitro, with a strong preference toward substrates of &gt;8 carbons. This Xenopus tropicalis (Western clawed frog) protein is Esterase OVCA2 (ovca2).